The primary structure comprises 146 residues: Large ribosomal subunit protein uL15 (146 aa).

Basic and acidic residues predominate over residues 1–13 (MKLHELKPAEGSR). Positions 1-51 (MKLHELKPAEGSRKVRNRVGRGTSSGNGKTSGRGQKGQKARSGGGVRLGFE) are disordered. Composition is skewed to gly residues over residues 23–35 (TSSG…GRGQ) and 42–51 (SGGGVRLGFE).

This sequence belongs to the universal ribosomal protein uL15 family. Part of the 50S ribosomal subunit.

In terms of biological role, binds to the 23S rRNA. The protein is Large ribosomal subunit protein uL15 of Streptococcus pneumoniae serotype 2 (strain D39 / NCTC 7466).